The chain runs to 546 residues: MTPLVSRLSRLWAIMRKPRAAVGSGHRKQAASQEGRQKHAKNNSQAKPSACDGMIAECPGAPAGLARQPEEVVLQASVSSYHLFRDVAEVTAFRGSLLSWYDQEKRDLPWRRRAEDEMDLDRRAYAVWVSEVMLQQTQVATVINYYTGWMQKWPTLQDLASASLEEVNQLWAGLGYYSRGRRLQEGARKVVEELGGHMPRTAETLQQLLPGVGRYTAGAIASIAFGQATGVVDGNVARVLCRVRAIGADPSSTLVSQQLWGLAQQLVDPARPGDFNQAAMELGATVCTPQRPLCSQCPVESLCRARQRVEQEQLLASGSLSGSPDVEECAPNTGQCHLCLPPSEPWDQTLGVVNFPRKASRKPPREESSATCVLEQPGALGAQILLVQRPNSGLLAGLWEFPSVTWEPSEQLQRKALLQELQRWAGPLPATHLRHLGEVVHTFSHIKLTYQVYGLALEGQTPVTTVPPGARWLTQEEFHTAAVSTAMKKVFRVYQGQQPGTCMGSKRSQVSSPCSRKKPRMGQQVLDNFFRSHISTDAHSLNSAAQ.

Positions 19-51 (RAAVGSGHRKQAASQEGRQKHAKNNSQAKPSAC) are disordered. E131 serves as the catalytic Proton donor/acceptor. Residues C287, C294, C297, and C303 each coordinate [4Fe-4S] cluster. The region spanning 364–495 (PREESSATCV…AMKKVFRVYQ (132 aa)) is the Nudix hydrolase domain. Positions 404 to 426 (VTWEPSEQLQRKALLQELQRWAG) match the Nudix box motif.

The protein belongs to the Nth/MutY family. [4Fe-4S] cluster serves as cofactor.

Its subcellular location is the nucleus. The protein resides in the mitochondrion. It carries out the reaction Hydrolyzes free adenine bases from 7,8-dihydro-8-oxoguanine:adenine mismatched double-stranded DNA, leaving an apurinic site.. Its function is as follows. Involved in oxidative DNA damage repair. Initiates repair of A*oxoG to C*G by removing the inappropriately paired adenine base from the DNA backbone. Possesses both adenine and 2-OH-A DNA glycosylase activities. This chain is Adenine DNA glycosylase (MUTYH), found in Homo sapiens (Human).